Reading from the N-terminus, the 585-residue chain is Proline--tRNA ligase (585 aa).

The protein belongs to the class-II aminoacyl-tRNA synthetase family. ProS type 1 subfamily. As to quaternary structure, homodimer.

Its subcellular location is the cytoplasm. It carries out the reaction tRNA(Pro) + L-proline + ATP = L-prolyl-tRNA(Pro) + AMP + diphosphate. In terms of biological role, catalyzes the attachment of proline to tRNA(Pro) in a two-step reaction: proline is first activated by ATP to form Pro-AMP and then transferred to the acceptor end of tRNA(Pro). As ProRS can inadvertently accommodate and process non-cognate amino acids such as alanine and cysteine, to avoid such errors it has two additional distinct editing activities against alanine. One activity is designated as 'pretransfer' editing and involves the tRNA(Pro)-independent hydrolysis of activated Ala-AMP. The other activity is designated 'posttransfer' editing and involves deacylation of mischarged Ala-tRNA(Pro). The misacylated Cys-tRNA(Pro) is not edited by ProRS. This is Proline--tRNA ligase from Corynebacterium diphtheriae (strain ATCC 700971 / NCTC 13129 / Biotype gravis).